Consider the following 49-residue polypeptide: Thymopoietin-1 (49 aa).

An LEM-like domain is found at Leu4–Leu47. The segment at Arg32–Tyr36 is biological activity.

The protein belongs to the thymopoietin family.

Its function is as follows. Hormone of the thymus with pleiotropic actions on prothymocytes, mature T-cells, the nicotinic acetylcholine receptor, and pituitary corticotrophs. The polypeptide is Thymopoietin-1 (Bos taurus (Bovine)).